A 506-amino-acid chain; its full sequence is Spindle pole body protein CSA6 (506 aa).

4 disordered regions span residues 18-121 (SPIK…PNEN), 252-276 (EKHNNPQDSPPKVKIATPDPEVETQ), 329-429 (PSSP…YSIR), and 447-470 (KNDQKDTNSPEESNTDGKEEEEKV). Residues 38–48 (IDLRDYMDRQK) show a composition bias toward basic and acidic residues. The segment covering 50 to 59 (SRNYSDSEYT) has biased composition (polar residues). The segment covering 63–72 (IKREKPETKQ) has biased composition (basic and acidic residues). Residues 94–119 (PTKNYSQHVMQERSAPNSPQKKSLPN) are compositionally biased toward polar residues. Polar residues-rich tracts occupy residues 330–353 (SSPNHQTQPVFQSTPQSKVESVNL) and 361–389 (QPSHVSSNSQQNLSDKSRTSIPSRDNPSP). Composition is skewed to basic and acidic residues over residues 412-422 (EWTREREERDG) and 461-470 (TDGKEEEEKV).

It is found in the cytoplasm. Its subcellular location is the cytoskeleton. It localises to the microtubule organizing center. The protein localises to the spindle pole body. Its function is as follows. Plays a role in mitotic spindle pole body organization, possibly at the point of spindle pole body separation. Required for mitotic exit. This chain is Spindle pole body protein CSA6, found in Candida tropicalis (strain ATCC MYA-3404 / T1) (Yeast).